A 540-amino-acid chain; its full sequence is Cytosolic carboxypeptidase 6 (540 aa).

A Peptidase M14 domain is found at 167–438; the sequence is YPYTYTRFQH…NVARTFLDYY (272 aa). H230, E233, and H328 together coordinate Zn(2+). E401 acts as the Proton donor/acceptor in catalysis.

The protein belongs to the peptidase M14 family. As to quaternary structure, interacts with MYLK. Requires Zn(2+) as cofactor. In terms of tissue distribution, widely expressed. Expressed abundantly in testis, pituitary and brain and to a lower extent in eye, stomach, adrenal and kidney. In brain, expressed at low level in cerebellum as compared to cortex.

It localises to the cytoplasm. It is found in the cytosol. The protein resides in the cytoskeleton. The protein localises to the microtubule organizing center. Its subcellular location is the centrosome. It localises to the centriole. It is found in the golgi apparatus. The protein resides in the cilium basal body. It catalyses the reaction (L-glutamyl)(n+1)-gamma-L-glutamyl-L-glutamyl-[protein] + H2O = (L-glutamyl)(n)-gamma-L-glutamyl-L-glutamyl-[protein] + L-glutamate. It carries out the reaction C-terminal L-alpha-aminoacyl-L-glutamyl-L-glutamyl-[tubulin] + H2O = C-terminal L-alpha-aminoacyl-L-glutamyl-[tubulin] + L-glutamate. In terms of biological role, metallocarboxypeptidase that mediates protein deglutamylation of tubulin and non-tubulin target proteins. Catalyzes the removal of polyglutamate side chains present on the gamma-carboxyl group of glutamate residues within the C-terminal tail of tubulin protein. Specifically cleaves tubulin long-side-chains, while it is not able to remove the branching point glutamate. Also catalyzes the removal of polyglutamate residues from the carboxy-terminus of non-tubulin proteins such as MYLK. Mediates the deglutamylation of nucleotidyltransferase CGAS, leading to CGAS antiviral defense response activation. Involved in KLF4 deglutamylation which promotes KLF4 proteasome-mediated degradation, thereby negatively regulating cell pluripotency maintenance and embryogenesis. In Mus musculus (Mouse), this protein is Cytosolic carboxypeptidase 6.